A 134-amino-acid polypeptide reads, in one-letter code: Phosphoribosyl-AMP cyclohydrolase (134 aa).

Aspartate 77 is a Mg(2+) binding site. Residue cysteine 78 coordinates Zn(2+). 2 residues coordinate Mg(2+): aspartate 79 and aspartate 81. The Zn(2+) site is built by cysteine 95 and cysteine 102.

Belongs to the PRA-CH family. As to quaternary structure, homodimer. The cofactor is Mg(2+). It depends on Zn(2+) as a cofactor.

It localises to the cytoplasm. The enzyme catalyses 1-(5-phospho-beta-D-ribosyl)-5'-AMP + H2O = 1-(5-phospho-beta-D-ribosyl)-5-[(5-phospho-beta-D-ribosylamino)methylideneamino]imidazole-4-carboxamide. The protein operates within amino-acid biosynthesis; L-histidine biosynthesis; L-histidine from 5-phospho-alpha-D-ribose 1-diphosphate: step 3/9. Its function is as follows. Catalyzes the hydrolysis of the adenine ring of phosphoribosyl-AMP. This Pseudomonas aeruginosa (strain UCBPP-PA14) protein is Phosphoribosyl-AMP cyclohydrolase.